The chain runs to 1573 residues: Mediator of RNA polymerase II transcription subunit 1 (1573 aa).

The LXXLL motif 1 signature appears at 588–592 (LTSLL). Disordered stretches follow at residues 595–691 (TSNS…EDDF), 774–883 (SKLP…FKDF), and 928–1564 (LGGP…GDDD). Over residues 606-617 (PTPPQHTPPPAS) the composition is skewed to pro residues. The LXXLL motif 2 motif lies at 629-633 (LMNLL). Positions 651–668 (ERQNSSGSPRTELGSSAS) are enriched in polar residues. The segment covering 678–691 (TGTEKMKNQTEDDF) has biased composition (basic and acidic residues). Composition is skewed to polar residues over residues 791–804 (RDSS…STLF), 835–864 (GSPN…QSGF), and 934–944 (QETQSRSQSPL). Over residues 949 to 961 (LGKDRPQKQKVKE) the composition is skewed to basic and acidic residues. Residues 963–973 (GNGGGAGGGLS) are compositionally biased toward gly residues. Composition is skewed to low complexity over residues 1025 to 1038 (PTST…GTSG), 1053 to 1085 (KITI…SSSS), 1092 to 1116 (SSLS…MKIG), 1124 to 1143 (SGQS…SMGK), and 1155 to 1164 (SSNVNNSSGS). A compositionally biased stretch (polar residues) spans 1176-1193 (MNPSLSKPNISPSHSRPS). Over residues 1226-1277 (LSGSGSNSTTKSSSGLVSSGSLTQKPNSSSSSSSSSSSSSSSSSSSSSSFSS) the composition is skewed to low complexity. Polar residues predominate over residues 1278 to 1290 (GVSQNLHSSSKGK). Residues 1350 to 1362 (PTKREKGEKDKSK) show a composition bias toward basic and acidic residues. Composition is skewed to polar residues over residues 1420-1435 (SQMQ…SGST) and 1443-1457 (PSHN…QALD). The span at 1461-1471 (ESGSSSIAEKS) shows a compositional bias: low complexity. Positions 1496 to 1505 (KHKKHKKEKK) are enriched in basic residues. A compositionally biased stretch (basic and acidic residues) spans 1506 to 1518 (RLKDKDRDREKKK).

This sequence belongs to the Mediator complex subunit 1 family. As to quaternary structure, component of the Mediator complex.

It localises to the nucleus. In terms of biological role, component of the Mediator complex, a coactivator involved in the regulated transcription of nearly all RNA polymerase II-dependent genes. Mediator functions as a bridge to convey information from gene-specific regulatory proteins to the basal RNA polymerase II transcription machinery. Mediator is recruited to promoters by direct interactions with regulatory proteins and serves as a scaffold for the assembly of a functional preinitiation complex with RNA polymerase II and the general transcription factors. In Xenopus tropicalis (Western clawed frog), this protein is Mediator of RNA polymerase II transcription subunit 1 (med1).